Reading from the N-terminus, the 152-residue chain is Spermine/spermidine N(1)-acetyltransferase (152 aa).

The N-acetyltransferase domain occupies 3–152; sequence INIKAVTDDN…NGEKVMVKEL (150 aa). Acetyl-CoA is bound by residues 82–84, 89–95, and 122–131; these read FFI, QGKGLGK, and NIHAIRLYQR. Catalysis depends on tyrosine 129, which acts as the Proton donor.

It belongs to the acetyltransferase family.

It carries out the reaction an alkane-alpha,omega-diamine + acetyl-CoA = an N-acetylalkane-alpha,omega-diamine + CoA + H(+). It catalyses the reaction spermine + acetyl-CoA = N(1)-acetylspermine + CoA + H(+). The enzyme catalyses spermidine + acetyl-CoA = N(1)-acetylspermidine + CoA + H(+). Its pathway is amine and polyamine degradation; spermine degradation. The protein operates within amine and polyamine degradation; spermidine degradation. Putrescine and N(8)-acetylspermidine are competitive inhibitors of spermidine acetylation. Functionally, acetylates both spermidine and spermine at primary propyl amine moieties, with spermine being the preferred substrate. The chain is Spermine/spermidine N(1)-acetyltransferase (bltD) from Bacillus subtilis (strain 168).